The sequence spans 234 residues: Large ribosomal subunit protein uL1 (234 aa).

The protein belongs to the universal ribosomal protein uL1 family. In terms of assembly, part of the 50S ribosomal subunit.

In terms of biological role, binds directly to 23S rRNA. The L1 stalk is quite mobile in the ribosome, and is involved in E site tRNA release. Its function is as follows. Protein L1 is also a translational repressor protein, it controls the translation of the L11 operon by binding to its mRNA. This Bdellovibrio bacteriovorus (strain ATCC 15356 / DSM 50701 / NCIMB 9529 / HD100) protein is Large ribosomal subunit protein uL1.